Consider the following 256-residue polypeptide: Thiazole synthase (256 aa).

Lys-95 functions as the Schiff-base intermediate with DXP in the catalytic mechanism. 1-deoxy-D-xylulose 5-phosphate contacts are provided by residues Gly-156, 182 to 183 (AG), and 204 to 205 (NT).

This sequence belongs to the ThiG family. As to quaternary structure, homotetramer. Forms heterodimers with either ThiH or ThiS.

Its subcellular location is the cytoplasm. The catalysed reaction is [ThiS sulfur-carrier protein]-C-terminal-Gly-aminoethanethioate + 2-iminoacetate + 1-deoxy-D-xylulose 5-phosphate = [ThiS sulfur-carrier protein]-C-terminal Gly-Gly + 2-[(2R,5Z)-2-carboxy-4-methylthiazol-5(2H)-ylidene]ethyl phosphate + 2 H2O + H(+). Its pathway is cofactor biosynthesis; thiamine diphosphate biosynthesis. In terms of biological role, catalyzes the rearrangement of 1-deoxy-D-xylulose 5-phosphate (DXP) to produce the thiazole phosphate moiety of thiamine. Sulfur is provided by the thiocarboxylate moiety of the carrier protein ThiS. In vitro, sulfur can be provided by H(2)S. The protein is Thiazole synthase of Salmonella choleraesuis (strain SC-B67).